The sequence spans 149 residues: Protein AE7-like 2 (149 aa).

The protein belongs to the MIP18 family.

Its function is as follows. May play a role in chromosome segregation through establishment of sister chromatid cohesion. Unable to complement ae7 mutants, and thus probably not involved in the cytosolic iron-sulfur assembly (CIA) pathway. This Arabidopsis thaliana (Mouse-ear cress) protein is Protein AE7-like 2.